A 546-amino-acid polypeptide reads, in one-letter code: MQNINPTQTAAWSALEQHKADNLNIPQLFAEDANRFDKYHLNFEQQILVDFSKNAINQKTLELLRQLANECGLASATEAMFSGQKINRTENRAVLHTALRNRSNTPVLVDGKDVMPEVNAVLAKMKDFCERIISGSWKGYTGKAITDVINIGIGGSDLGPYMVTEALRPYKNHLNMHFVSNVDGTHIAEVLKKVNPETTLVLVASKTFTTQETMANALTAREWLLAAVKDESAVAKHFAALSTNAKEVAKFGIDTANMFEFWDWVGGRYSLWSAIGLSIALSLGFENFEALLSGAHAMDNHFRTAPIEKNIPTTLALIGIWNSNFLGAETEALLPYDQYLHRFAAYFQQGNMESNGKFVGRDGSPVTHQTGPIVWGEPGTNGQHAFYQLIHQGTKLIPCDFIAPAQTHNPVGDHHAKLLSNFFAQTEALAFGKSKETVEAEFVAAGKNLADVAEIVPFKVFTGNKPTNSILVQKITPFTLGALIAMYEHKIFVQGVIFNIYSFDQWGVELGKQLANRILPELQNAEKISSHDSSTNGLINQFKAWR.

The active-site Proton donor is the E353. Active-site residues include H384 and K512.

This sequence belongs to the GPI family.

It localises to the cytoplasm. The enzyme catalyses alpha-D-glucose 6-phosphate = beta-D-fructose 6-phosphate. The protein operates within carbohydrate biosynthesis; gluconeogenesis. It functions in the pathway carbohydrate degradation; glycolysis; D-glyceraldehyde 3-phosphate and glycerone phosphate from D-glucose: step 2/4. Catalyzes the reversible isomerization of glucose-6-phosphate to fructose-6-phosphate. The sequence is that of Glucose-6-phosphate isomerase from Actinobacillus pleuropneumoniae serotype 3 (strain JL03).